A 322-amino-acid chain; its full sequence is Mas-related G-protein coupled receptor member X1 (322 aa).

Residues 1–30 (MDPTISSHDTESTPLNETGHPNCTPILTLS) lie on the Extracellular side of the membrane. Asparagine 16 carries an N-linked (GlcNAc...) asparagine glycan. A helical membrane pass occupies residues 31 to 51 (FLVLITTLVGLAGNTIVLWLL). Topologically, residues 52–59 (GFRMRRKA) are cytoplasmic. A helical transmembrane segment spans residues 60-80 (ISVYILNLALADSFFLCCHFI). At 81–100 (DSLLRIIDFYGLYAHKLSKD) the chain is on the extracellular side. The chain crosses the membrane as a helical span at residues 101–121 (ILGNAAIIPYISGLSILSAIS). Topologically, residues 122 to 142 (TERCLCVLWPIWYHCHRPRNM) are cytoplasmic. Residues 143 to 163 (SAIICALIWVLSFLMGILDWF) form a helical membrane-spanning segment. Residues 164–179 (SGFLGETHHHLWKNVD) are Extracellular-facing. A helical membrane pass occupies residues 180-200 (FIITAFLIFLFMLLSGSSLAL). At 201-223 (LLRILCGPRRKPLSRLYVTIALT) the chain is on the cytoplasmic side. A helical membrane pass occupies residues 224–244 (VMVYLICGLPLGLYLFLLYWF). Residues 245–257 (GVHLHYPFCHIYQ) lie on the Extracellular side of the membrane. Residues 258-278 (VTAVLSCVNSSANPIIYFLVG) form a helical membrane-spanning segment. Residues 279–322 (SFRQHRKHRSLKRVLKRALEDTPEEDEYTDSHLHKTTEISESRY) lie on the Cytoplasmic side of the membrane.

This sequence belongs to the G-protein coupled receptor 1 family. Mas subfamily. As to expression, expressed in a subset of IB4-positive small diameter nociceptive dorsal root neurons.

Its subcellular location is the cell membrane. Functionally, orphan receptor activated by neuropeptides terminating in Arg-Phe or Arg-Phe-amide. Mediates its action by association with G proteins that activate a phosphatidylinositol-calcium second messenger system. Its effect is mediated by G(q) and G(11) proteins. May regulate the function of nociceptive neurons by modulation of pain perception. In Mus musculus (Mouse), this protein is Mas-related G-protein coupled receptor member X1.